Here is a 435-residue protein sequence, read N- to C-terminus: 5-methylthioadenosine/S-adenosylhomocysteine deaminase (435 aa).

Positions 65 and 67 each coordinate Zn(2+). Residues Glu94, Arg150, and His189 each coordinate substrate. A Zn(2+)-binding site is contributed by His216. 2 residues coordinate substrate: Glu219 and Asp304. Asp304 provides a ligand contact to Zn(2+).

This sequence belongs to the metallo-dependent hydrolases superfamily. MTA/SAH deaminase family. Requires Zn(2+) as cofactor.

It carries out the reaction S-adenosyl-L-homocysteine + H2O + H(+) = S-inosyl-L-homocysteine + NH4(+). It catalyses the reaction S-methyl-5'-thioadenosine + H2O + H(+) = S-methyl-5'-thioinosine + NH4(+). In terms of biological role, catalyzes the deamination of 5-methylthioadenosine and S-adenosyl-L-homocysteine into 5-methylthioinosine and S-inosyl-L-homocysteine, respectively. Is also able to deaminate adenosine. This chain is 5-methylthioadenosine/S-adenosylhomocysteine deaminase, found in Bacillus anthracis (strain A0248).